The chain runs to 348 residues: GMP reductase 2 (348 aa).

Residues S26–R27, K78, D129–A131, and I180–G181 contribute to the NADP(+) site. 3 residues coordinate K(+): G181, G183, and C186. The active-site Thioimidate intermediate is the C186. The Proton donor/acceptor role is filled by T188. R189 lines the K(+) pocket. GMP contacts are provided by residues D219–G221, G242–G243, G268–S270, and R286–G290. Residues M269 and Y285–R286 contribute to the NADP(+) site. Position 291 is an N6-acetyllysine (K291). Residue S314–T317 participates in NADP(+) binding.

Belongs to the IMPDH/GMPR family. GuaC type 1 subfamily. Homotetramer.

It catalyses the reaction IMP + NH4(+) + NADP(+) = GMP + NADPH + 2 H(+). Catalyzes the irreversible NADPH-dependent deamination of GMP to IMP. It functions in the conversion of nucleobase, nucleoside and nucleotide derivatives of G to A nucleotides, and in maintaining the intracellular balance of A and G nucleotides. Plays a role in modulating cellular differentiation. This chain is GMP reductase 2, found in Bos taurus (Bovine).